We begin with the raw amino-acid sequence, 480 residues long: Proline--tRNA ligase (480 aa).

It belongs to the class-II aminoacyl-tRNA synthetase family. ProS type 3 subfamily. In terms of assembly, homodimer.

The protein resides in the cytoplasm. It carries out the reaction tRNA(Pro) + L-proline + ATP = L-prolyl-tRNA(Pro) + AMP + diphosphate. In terms of biological role, catalyzes the attachment of proline to tRNA(Pro) in a two-step reaction: proline is first activated by ATP to form Pro-AMP and then transferred to the acceptor end of tRNA(Pro). The chain is Proline--tRNA ligase from Chloroflexus aggregans (strain MD-66 / DSM 9485).